The primary structure comprises 409 residues: Elongation factor Tu (409 aa).

Residues 10 to 214 (KPHVNVGTIG…AVDSYIPTPE (205 aa)) form the tr-type G domain. A G1 region spans residues 19-26 (GHVDHGKT). A GTP-binding site is contributed by 19-26 (GHVDHGKT). Mg(2+) is bound at residue Thr-26. The tract at residues 60–64 (GITIN) is G2. A G3 region spans residues 81 to 84 (DCPG). Residues 81 to 85 (DCPGH) and 136 to 139 (NKVD) each bind GTP. The G4 stretch occupies residues 136–139 (NKVD). A G5 region spans residues 174 to 176 (SAL).

It belongs to the TRAFAC class translation factor GTPase superfamily. Classic translation factor GTPase family. EF-Tu/EF-1A subfamily. Monomer.

Its subcellular location is the cytoplasm. The catalysed reaction is GTP + H2O = GDP + phosphate + H(+). Its function is as follows. GTP hydrolase that promotes the GTP-dependent binding of aminoacyl-tRNA to the A-site of ribosomes during protein biosynthesis. The chain is Elongation factor Tu from Synechococcus sp. (strain JA-3-3Ab) (Cyanobacteria bacterium Yellowstone A-Prime).